The following is a 247-amino-acid chain: Virulence plasmid protein pGP6-D (247 aa).

The protein belongs to the UPF0137 (pGP6-D) family.

The sequence is that of Virulence plasmid protein pGP6-D from Chlamydia trachomatis.